Consider the following 680-residue polypeptide: Methionine--tRNA ligase (680 aa).

The 'HIGH' region signature appears at 15–25 (PYANGPVHIGH). Zn(2+)-binding residues include Cys-147, Cys-150, Cys-160, and Cys-163. The 'KMSKS' region signature appears at 332-336 (KISTS). Thr-335 provides a ligand contact to ATP. Residues 578-680 (EFEKLDIRVG…REVKPGSEVK (103 aa)) enclose the tRNA-binding domain.

Belongs to the class-I aminoacyl-tRNA synthetase family. MetG type 1 subfamily. In terms of assembly, homodimer. Zn(2+) serves as cofactor.

The protein localises to the cytoplasm. It carries out the reaction tRNA(Met) + L-methionine + ATP = L-methionyl-tRNA(Met) + AMP + diphosphate. Its function is as follows. Is required not only for elongation of protein synthesis but also for the initiation of all mRNA translation through initiator tRNA(fMet) aminoacylation. In Phocaeicola vulgatus (strain ATCC 8482 / DSM 1447 / JCM 5826 / CCUG 4940 / NBRC 14291 / NCTC 11154) (Bacteroides vulgatus), this protein is Methionine--tRNA ligase.